The chain runs to 799 residues: MLRGQRHGQLGWHRPAAGLGGLVTSLMLACACAASCRETCCPVGPSGLRCTRAGTLNTLRGLRGAGNLTELYVENQRDLQRLEFEDLQGLGELRSLTIVKSGLRFVAPDAFHFTPRLSHLNLSSNALESLSWKTVQGLSLQDLTLSGNPLHCSCALLWLQRWEQEDLCGVYTQKLQGSGSGDQFLPLGHNNSCGVPSVKIQMPNDSVEVGDDVFLQCQVEGQALQQADWILTELEGTATMKKSGDLPSLGLTLVNVTSDLNKKNVTCWAENDVGRAEVSVQVSVSFPASVHLGKAVEQHHWCIPFSVDGQPAPSLRWFFNGSVLNETSFIFTQFLESALTNETMRHGCLRLNQPTHVNNGNYTLLAANPYGQAAASIMAAFMDNPFEFNPEDPIPVSFSPVDTNSTSRDPVEKKDETPFGVSVAVGLAVSAALFLSALLLVLNKCGQRSKFGINRPAVLAPEDGLAMSLHFMTLGGSSLSPTEGKGSGLQGHIMENPQYFSDTCVHHIKRQDIILKWELGEGAFGKVFLAECYNLLNDQDKMLVAVKALKETSENARQDFHREAELLTMLQHQHIVRFFGVCTEGGPLLMVFEYMRHGDLNRFLRSHGPDAKLLAGGEDVAPGPLGLGQLLAVASQVAAGMVYLASLHFVHRDLATRNCLVGQGLVVKIGDFGMSRDIYSTDYYRVGGRTMLPIRWMPPESILYRKFSTESDVWSFGVVLWEIFTYGKQPWYQLSNTEAIECITQGRELERPRACPPDVYAIMRGCWQREPQQRLSMKDVHARLQALAQAPPSYLDVLG.

A signal peptide spans Met-1–Cys-32. At Ala-33 to Pro-418 the chain is on the extracellular side. 2 cysteine pairs are disulfide-bonded: Cys-36–Cys-41 and Cys-40–Cys-50. Asn-67 is a glycosylation site (N-linked (GlcNAc...) asparagine). 2 LRR repeats span residues Leu-90–Phe-113 and Arg-116–Gly-137. Residues Asn-121, Asn-190, Asn-204, Asn-255, Asn-264, Asn-320, Asn-325, Asn-341, Asn-361, and Asn-404 are each glycosylated (N-linked (GlcNAc...) asparagine). Residues Asn-148–Val-219 form the LRRCT domain. An intrachain disulfide couples Cys-154 to Cys-193. 2 consecutive Ig-like C2-type domains span residues Pro-196–Ser-285 and Ala-295–Asn-368. 2 cysteine pairs are disulfide-bonded: Cys-217–Cys-267 and Cys-302–Cys-348. Residues Phe-419–Leu-442 traverse the membrane as a helical segment. Residues Asn-443–Gly-799 lie on the Cytoplasmic side of the membrane. Residues Met-472–Ile-493 form an interaction with SQSTM1 region. Position 499 is a phosphotyrosine; by autocatalysis (Tyr-499). The Protein kinase domain occupies Ile-513–Leu-784. Residues Leu-519–Val-527 and Lys-547 contribute to the ATP site. The active-site Proton acceptor is the Asp-653. 4 positions are modified to phosphotyrosine; by autocatalysis: Tyr-679, Tyr-683, Tyr-684, and Tyr-794.

It belongs to the protein kinase superfamily. Tyr protein kinase family. Insulin receptor subfamily. Exists in a dynamic equilibrium between monomeric (low affinity) and dimeric (high affinity) structures. Homodimerization is induced by binding of a NGF dimer. Found in a complex, at least composed of KIDINS220, MAGI2, NTRK1 and RAPGEF2; the complex is mainly formed at late endosomes in a nerve growth factor (NGF)-dependent manner. Interacts with RAPGEF2; the interaction is strengthened after NGF stimulation. Interacts with SQSTM1; bridges NTRK1 to NGFR. Forms a ternary complex with NGFR and KIDINS220; this complex is affected by the expression levels of KIDINS220 and an increase in KIDINS220 expression leads to a decreased association of NGFR and NTRK1. Interacts (phosphorylated upon activation by NGF) with SHC1; mediates SHC1 phosphorylation and activation. Interacts (phosphorylated upon activation by NGF) with PLCG1; mediates PLCG1 phosphorylation and activation. Interacts (phosphorylated) with SH2B1 and SH2B2. Interacts with GRB2. Interacts with PIK3R1. Interacts with FRS2. Interacts with SORT1; may regulate NTRK1 anterograde axonal transport. Interacts with SH2D1A; regulates NTRK1. Interacts with NRADD. Interacts with RAB7A. Interacts with PTPRS. Interacts with USP36; USP36 does not deubiquitinate NTRK1. Interacts with GGA3. Interacts with TSPAN1; this interaction promotes NTRK1 stability. Ligand-mediated autophosphorylation. Interaction with SQSTM1 is phosphotyrosine-dependent. Autophosphorylation at Tyr-499 mediates interaction and phosphorylation of SHC1. In terms of processing, N-glycosylated. Post-translationally, ubiquitinated. Undergoes polyubiquitination upon activation; regulated by NGFR. Ubiquitination by NEDD4L leads to degradation. Ubiquitination regulates the internalization of the receptor. Isoform Trka-II is primarily expressed in neuronal cells; isoform Trka-I is found in non-neuronal tissues.

It is found in the cell membrane. The protein resides in the early endosome membrane. Its subcellular location is the late endosome membrane. It localises to the recycling endosome membrane. It carries out the reaction L-tyrosyl-[protein] + ATP = O-phospho-L-tyrosyl-[protein] + ADP + H(+). The pro-survival signaling effect of NTRK1 in neurons requires its endocytosis into signaling early endosomes and its retrograde axonal transport. This is regulated by different proteins including CFL1, RAC1 and SORT1. NTF3 is unable to induce this signaling probably due to the lability of the NTF3-NTRK1 complex in endosomes. SH2D1A inhibits the autophosphorylation of the receptor, and alters the recruitment and activation of downstream effectors and signaling cascades. Regulated by NGFR. Its function is as follows. Receptor tyrosine kinase involved in the development and the maturation of the central and peripheral nervous systems through regulation of proliferation, differentiation and survival of sympathetic and nervous neurons. High affinity receptor for NGF which is its primary ligand. Can also bind and be activated by NTF3/neurotrophin-3. However, NTF3 only supports axonal extension through NTRK1 but has no effect on neuron survival. Upon dimeric NGF ligand-binding, undergoes homodimerization, autophosphorylation and activation. Recruits, phosphorylates and/or activates several downstream effectors including SHC1, FRS2, SH2B1, SH2B2 and PLCG1 that regulate distinct overlapping signaling cascades driving cell survival and differentiation. Through SHC1 and FRS2 activates a GRB2-Ras-MAPK cascade that regulates cell differentiation and survival. Through PLCG1 controls NF-Kappa-B activation and the transcription of genes involved in cell survival. Through SHC1 and SH2B1 controls a Ras-PI3 kinase-AKT1 signaling cascade that is also regulating survival. In absence of ligand and activation, may promote cell death, making the survival of neurons dependent on trophic factors. This chain is High affinity nerve growth factor receptor (Ntrk1), found in Rattus norvegicus (Rat).